Consider the following 319-residue polypeptide: Triacylglycerol lipase (319 aa).

One can recognise an AB hydrolase-1 domain in the interval 10–288; sequence PVILVHGLAG…TSYHWNHLDE (279 aa). Position 17 (Leu17) interacts with substrate. Catalysis depends on Ser87, which acts as the Nucleophile. Gln88 is a binding site for substrate. A disulfide bridge connects residues Cys190 and Cys269. Asp241 is a binding site for Ca(2+). Active-site charge relay system residues include Asp263 and His285. Residues Asp287, Gln291, and Val295 each contribute to the Ca(2+) site.

Belongs to the AB hydrolase superfamily. Pseudomonas lipase family. As to quaternary structure, monomer. Interacts with lipase-specific foldase Lif. The cofactor is Ca(2+).

It localises to the secreted. It carries out the reaction a triacylglycerol + H2O = a diacylglycerol + a fatty acid + H(+). Functionally, catalyzes the hydrolysis of triacylglycerol. This Pseudarthrobacter phenanthrenivorans (Arthrobacter phenanthrenivorans) protein is Triacylglycerol lipase.